We begin with the raw amino-acid sequence, 332 residues long: 2,3-diketo-L-gulonate reductase (332 aa).

The Proton donor role is filled by histidine 44. NAD(+) is bound by residues 168 to 174, 224 to 225, and 304 to 306; these read ITMVDMS, WK, and GHE.

It belongs to the LDH2/MDH2 oxidoreductase family. DlgD subfamily. In terms of assembly, homodimer.

The protein localises to the cytoplasm. The enzyme catalyses 3-dehydro-L-gulonate + NAD(+) = 2,3-dioxo-L-gulonate + NADH + H(+). The catalysed reaction is 3-dehydro-L-gulonate + NADP(+) = 2,3-dioxo-L-gulonate + NADPH + H(+). In terms of biological role, catalyzes the reduction of 2,3-diketo-L-gulonate in the presence of NADH, to form 3-keto-L-gulonate. The chain is 2,3-diketo-L-gulonate reductase from Escherichia coli O81 (strain ED1a).